Reading from the N-terminus, the 257-residue chain is 24 kDa outer membrane protein (257 aa).

Positions 1-21 (MKNKSKLLACCLMALPISSFS) are cleaved as a signal peptide.

The protein belongs to the MipA/OmpV family.

It localises to the cell outer membrane. The protein is 24 kDa outer membrane protein of Pasteurella multocida (strain Pm70).